The sequence spans 209 residues: Vacuolar protein sorting-associated protein 28 homolog (209 aa).

The 105-residue stretch at 1 to 105 (MSQNSNLMRE…REGRPITVKD (105 aa)) folds into the VPS28 N-terminal domain. A VPS28 C-terminal domain is found at 109–205 (NVLKHIASIV…AYQSFQKALN (97 aa)).

It belongs to the VPS28 family. As to quaternary structure, component of the ESCRT-I complex (endosomal sorting complex required for transport I).

The protein resides in the endosome. In terms of biological role, component of the ESCRT-I complex, a regulator of vesicular trafficking process. This Caenorhabditis briggsae protein is Vacuolar protein sorting-associated protein 28 homolog.